The sequence spans 114 residues: uncharacterized protein (114 aa).

This is an uncharacterized protein from Archaeoglobus fulgidus (strain ATCC 49558 / DSM 4304 / JCM 9628 / NBRC 100126 / VC-16).